Here is a 658-residue protein sequence, read N- to C-terminus: Staphylocoagulase (658 aa).

The N-terminal stretch at 1–26 (MKKQIISLGALAVASSLFTWDNKADA) is a signal peptide. Composition is skewed to polar residues over residues 391 to 406 (MEQN…TQPT), 428 to 440 (GTES…QGES), 499 to 514 (PSET…QDGT), and 521 to 531 (PTQNKPSETNA). The tract at residues 391-531 (MEQNRPSLSD…TQNKPSETNA (141 aa)) is disordered. Tandem repeats lie at residues 492–518 (ARPR…VSYG), 519–545 (ARPT…VSYG), 546–572 (ARPT…VSYG), 573–599 (ARPT…VSYG), 600–626 (ARPT…VSYG), and 627–653 (ARPT…ATYG). A 6 X 27 AA tandem repeats of A-R-P-[RT]-[FQY]-[NK]-K-P-S-[EK]-T-N-A-Y-N-V-T-T-[NH]-[QA]-[DN]-G-[TQ]-[VA]-[ST]-Y-G region spans residues 492–653 (ARPRFNKPSE…THADGTATYG (162 aa)). The tract at residues 619–658 (ANGQVSYGARPTQKKPSETNAYNVTTHADGTATYGPRVTK) is disordered. Positions 636 to 646 (ETNAYNVTTHA) are enriched in polar residues.

This sequence belongs to the staphylocoagulase family.

Its function is as follows. Staphylocoagulase is an extracellular protein which specifically forms a complex with human prothrombin. This complex named staphylothrombin can clot fibrinogen without any proteolytic cleavage of prothrombin. In Staphylococcus aureus, this protein is Staphylocoagulase.